Reading from the N-terminus, the 144-residue chain is Large ribosomal subunit protein uL13 (144 aa).

Belongs to the universal ribosomal protein uL13 family. Part of the 50S ribosomal subunit.

Its function is as follows. This protein is one of the early assembly proteins of the 50S ribosomal subunit, although it is not seen to bind rRNA by itself. It is important during the early stages of 50S assembly. The protein is Large ribosomal subunit protein uL13 of Mycoplasmopsis agalactiae (strain NCTC 10123 / CIP 59.7 / PG2) (Mycoplasma agalactiae).